Here is a 199-residue protein sequence, read N- to C-terminus: VAMP-like protein YKT62 (199 aa).

The 125-residue stretch at 7–131 (LVLKCDPETR…PYLKEASDKF (125 aa)) folds into the Longin domain. Residues 139–199 (KLLKIQRELD…KKTNSCCTLL (61 aa)) form the v-SNARE coiled-coil homology domain. Residue cysteine 195 is the site of S-palmitoyl cysteine attachment. Residue cysteine 196 is modified to Cysteine methyl ester. Residue cysteine 196 is the site of S-geranylgeranyl cysteine attachment. Positions 197–199 (TLL) are cleaved as a propeptide — removed in mature form.

The protein belongs to the synaptobrevin family. As to quaternary structure, interacts with SYP41. Core constituent of the SNARE complex required for membrane fusion at the trans-Golgi network.

The protein localises to the cell membrane. Its function is as follows. Involved in the secretory pathway. Essential for membrane fusion mediated by either SYP41 or SYP61; triggers the fusion of phospholipid vesicles containing SYP41 or SYP61 and VTI12. This Arabidopsis thaliana (Mouse-ear cress) protein is VAMP-like protein YKT62.